A 230-amino-acid chain; its full sequence is Ribose-5-phosphate isomerase A (230 aa).

Substrate is bound by residues 31–34 (TGST), 88–91 (DGSD), and 101–104 (KGGG). Glu-110 acts as the Proton acceptor in catalysis. Substrate is bound at residue Lys-128.

The protein belongs to the ribose 5-phosphate isomerase family. In terms of assembly, homodimer.

The enzyme catalyses aldehydo-D-ribose 5-phosphate = D-ribulose 5-phosphate. Its pathway is carbohydrate degradation; pentose phosphate pathway; D-ribose 5-phosphate from D-ribulose 5-phosphate (non-oxidative stage): step 1/1. Its function is as follows. Catalyzes the reversible conversion of ribose-5-phosphate to ribulose 5-phosphate. The sequence is that of Ribose-5-phosphate isomerase A from Lactobacillus helveticus (strain DPC 4571).